We begin with the raw amino-acid sequence, 1040 residues long: Multidrug resistance protein MdtB (1040 aa).

12 consecutive transmembrane segments (helical) span residues 16–36 (FIMR…AGII), 347–367 (LMMA…NIPA), 369–389 (IIPG…MVFL), 396–416 (LTLM…IVVI), 440–460 (IGFT…PLLF), 472–492 (FAIT…TLTP), 537–557 (WLTL…WVFI), 863–883 (LGST…VLGI), 888–908 (FIHP…ALLA), 911–931 (IAGS…IGIV), 968–988 (ILMT…STGV), and 998–1018 (IGMV…TPVI).

It belongs to the resistance-nodulation-cell division (RND) (TC 2.A.6) family. MdtB subfamily. Part of a tripartite efflux system composed of MdtA, MdtB and MdtC. MdtB forms a heteromultimer with MdtC.

It localises to the cell inner membrane. The MdtABC tripartite complex confers resistance against novobiocin and deoxycholate. The protein is Multidrug resistance protein MdtB of Escherichia fergusonii (strain ATCC 35469 / DSM 13698 / CCUG 18766 / IAM 14443 / JCM 21226 / LMG 7866 / NBRC 102419 / NCTC 12128 / CDC 0568-73).